The following is a 96-amino-acid chain: Large ribosomal subunit protein uL18m (96 aa).

The protein belongs to the universal ribosomal protein uL18 family.

Its subcellular location is the mitochondrion. In Reclinomonas americana, this protein is Large ribosomal subunit protein uL18m (RPL18).